Consider the following 393-residue polypeptide: MNCGEGIDSRQIDELFINLDPIQAGGRLTTDAMKAVLAYGDGYSVCDHCTKPFRLDHISKPPLAEFHRDLASFLNMDVARLVPGARRGFQAVASAMVKPGDPVLLTAYSHYTEFLSVEQSKGTAFEIPADESHIITPDAAAARIEEVIKTTGKTPALMFIEQVDYQYGNQHPVSDLSKVAHQYDIPVLCNGAYTIGIMDVNGKELGADFLVGSGHKSMAAPAPSGVLATTSEWAEKVFRTTGIKGDLTGRTFGVKEVEMMGCTLMGVTSVGMMASFPHVKRRVKEFDAQVQYVNRIVDALLTIEGTKVQSEYPRKHTLTRMNTTDSFDTVAKTHKKKGFFLTSALRERGIAGILPGSTRVWKFNSYGITSEQADYIAESFIEIAEKEGLVCSR.

Pyridoxal 5'-phosphate is bound by residues 85 to 86 (AR), Asn-190, and 213 to 215 (SGH). Lys-216 is modified (N6-(pyridoxal phosphate)lysine).

The protein belongs to the SepCysS family. In terms of assembly, homodimer. Interacts with SepRS. The cofactor is pyridoxal 5'-phosphate.

It catalyses the reaction O-phospho-L-seryl-tRNA(Cys) + hydrogen sulfide + H(+) = L-cysteinyl-tRNA(Cys) + phosphate. Converts O-phospho-L-seryl-tRNA(Cys) (Sep-tRNA(Cys)) to L-cysteinyl-tRNA(Cys) (Cys-tRNA(Cys)). The protein is O-phospho-L-seryl-tRNA:Cys-tRNA synthase 1 of Methanospirillum hungatei JF-1 (strain ATCC 27890 / DSM 864 / NBRC 100397 / JF-1).